The primary structure comprises 493 residues: Glycylpeptide N-tetradecanoyltransferase (493 aa).

45–48 provides a ligand contact to tetradecanoyl-CoA; sequence HKFW. The interval 53 to 73 is disordered; the sequence is VPQITGSGAPAPIEEGPIDDP. Residues 182-184 and 190-194 each bind tetradecanoyl-CoA; these read LCV and SKRLA. Leu493 functions as the Proton acceptor; via carboxylate in the catalytic mechanism.

Belongs to the NMT family. As to quaternary structure, monomer.

The protein localises to the cytoplasm. It catalyses the reaction N-terminal glycyl-[protein] + tetradecanoyl-CoA = N-tetradecanoylglycyl-[protein] + CoA + H(+). Its function is as follows. Adds a myristoyl group to the N-terminal glycine residue of certain cellular proteins. The protein is Glycylpeptide N-tetradecanoyltransferase of Cryptococcus neoformans var. neoformans serotype D (strain B-3501A) (Filobasidiella neoformans).